The chain runs to 596 residues: Invasin CotH7 (596 aa).

The signal sequence occupies residues 1–17 (MKSLSFISLACLTAVHA). Residues Asn82, Asn146, Asn163, Asn169, Asn288, Asn440, and Asn544 are each glycosylated (N-linked (GlcNAc...) asparagine). The segment covering 528–544 (SATIAAPATSESASQDN) has biased composition (low complexity). The tract at residues 528-557 (SATIAAPATSESASQDNTSDDTDSASTSSS) is disordered. Ser567 carries the GPI-anchor amidated serine lipid modification. The propeptide at 568-596 (SASKSAPTFYCLQLVLYLSLSFKNLYKYI) is removed in mature form.

In terms of assembly, interacts with host integrin beta-1 ITGB1 on the cell surface of host alveolar epithelial cells.

The protein resides in the cell membrane. Promotes invasion of host epithelial cells by adhering to receptors on the host cell surface to facilitate endocytosis of the pathogen into host cells. Probably binds integrin ITGA3:ITGB1 via ITGB1, on the cell surface of host alveolar epithelial cells. The polypeptide is Invasin CotH7 (Rhizopus delemar (strain RA 99-880 / ATCC MYA-4621 / FGSC 9543 / NRRL 43880) (Mucormycosis agent)).